The following is a 143-amino-acid chain: Large ribosomal subunit protein bL28c (143 aa).

The transit peptide at 1–66 (MTTMATQGAW…SFPGIQPIVA (66 aa)) directs the protein to the chloroplast.

It belongs to the bacterial ribosomal protein bL28 family. In terms of assembly, part of the 50S ribosomal subunit.

It is found in the plastid. The protein localises to the chloroplast. The polypeptide is Large ribosomal subunit protein bL28c (RPL28) (Arabidopsis thaliana (Mouse-ear cress)).